Here is a 291-residue protein sequence, read N- to C-terminus: Formamidopyrimidine-DNA glycosylase (291 aa).

Residue Pro-2 is the Schiff-base intermediate with DNA of the active site. The Proton donor role is filled by Glu-3. Lys-58 acts as the Proton donor; for beta-elimination activity in catalysis. 3 residues coordinate DNA: His-100, Arg-123, and Lys-166. Residues 257–291 (SVYGREGKECSRCGMHIVRIVQSGRSSFYCPQCQK) form an FPG-type zinc finger. Arg-281 acts as the Proton donor; for delta-elimination activity in catalysis.

The protein belongs to the FPG family. In terms of assembly, monomer. Zn(2+) is required as a cofactor.

The catalysed reaction is Hydrolysis of DNA containing ring-opened 7-methylguanine residues, releasing 2,6-diamino-4-hydroxy-5-(N-methyl)formamidopyrimidine.. The enzyme catalyses 2'-deoxyribonucleotide-(2'-deoxyribose 5'-phosphate)-2'-deoxyribonucleotide-DNA = a 3'-end 2'-deoxyribonucleotide-(2,3-dehydro-2,3-deoxyribose 5'-phosphate)-DNA + a 5'-end 5'-phospho-2'-deoxyribonucleoside-DNA + H(+). Functionally, involved in base excision repair of DNA damaged by oxidation or by mutagenic agents. Acts as a DNA glycosylase that recognizes and removes damaged bases. Has a preference for oxidized purines, such as 7,8-dihydro-8-oxoguanine (8-oxoG). Has AP (apurinic/apyrimidinic) lyase activity and introduces nicks in the DNA strand. Cleaves the DNA backbone by beta-delta elimination to generate a single-strand break at the site of the removed base with both 3'- and 5'-phosphates. The chain is Formamidopyrimidine-DNA glycosylase from Bartonella bacilliformis (strain ATCC 35685 / KC583 / Herrer 020/F12,63).